A 256-amino-acid polypeptide reads, in one-letter code: Chlorophyll a-b binding protein CP24 10B, chloroplastic (256 aa).

Residues 1 to 45 (MTTTSATAVLNGLSSSFLTGGKKTQALLGAHVTARVTTPKRFVVA) constitute a chloroplast transit peptide. The next 2 membrane-spanning stretches (helical) occupy residues 106–126 (WAMA…IPWF) and 134–154 (AIAP…MGWV).

The protein belongs to the ELIP/psbS family.

Its subcellular location is the plastid. It is found in the chloroplast thylakoid membrane. The chain is Chlorophyll a-b binding protein CP24 10B, chloroplastic (CAP10B) from Solanum lycopersicum (Tomato).